Consider the following 282-residue polypeptide: Protoheme IX farnesyltransferase (282 aa).

The next 9 helical transmembrane spans lie at 13–33 (VAGM…GAAG), 36–56 (MVTS…FNQI), 74–96 (ASGR…PALI), 101–120 (AGGV…YNGV), 129–149 (AFSL…GWLA), 156–176 (SPEI…HFWL), 207–227 (LWYA…FIAE), 232–252 (IAVC…LASP), and 261–281 (VSML…SGII).

It belongs to the UbiA prenyltransferase family. Protoheme IX farnesyltransferase subfamily.

The protein localises to the cell inner membrane. The enzyme catalyses heme b + (2E,6E)-farnesyl diphosphate + H2O = Fe(II)-heme o + diphosphate. It functions in the pathway porphyrin-containing compound metabolism; heme O biosynthesis; heme O from protoheme: step 1/1. Functionally, converts heme B (protoheme IX) to heme O by substitution of the vinyl group on carbon 2 of heme B porphyrin ring with a hydroxyethyl farnesyl side group. The sequence is that of Protoheme IX farnesyltransferase from Oleidesulfovibrio alaskensis (strain ATCC BAA-1058 / DSM 17464 / G20) (Desulfovibrio alaskensis).